A 200-amino-acid chain; its full sequence is ATP-dependent Clp protease proteolytic subunit (200 aa).

The active-site Nucleophile is the S102. The active site involves H127.

Belongs to the peptidase S14 family. In terms of assembly, fourteen ClpP subunits assemble into 2 heptameric rings which stack back to back to give a disk-like structure with a central cavity, resembling the structure of eukaryotic proteasomes.

It localises to the cytoplasm. It catalyses the reaction Hydrolysis of proteins to small peptides in the presence of ATP and magnesium. alpha-casein is the usual test substrate. In the absence of ATP, only oligopeptides shorter than five residues are hydrolyzed (such as succinyl-Leu-Tyr-|-NHMec, and Leu-Tyr-Leu-|-Tyr-Trp, in which cleavage of the -Tyr-|-Leu- and -Tyr-|-Trp bonds also occurs).. Functionally, cleaves peptides in various proteins in a process that requires ATP hydrolysis. Has a chymotrypsin-like activity. Plays a major role in the degradation of misfolded proteins. In Dehalococcoides mccartyi (strain ATCC BAA-2100 / JCM 16839 / KCTC 5957 / BAV1), this protein is ATP-dependent Clp protease proteolytic subunit.